The following is a 238-amino-acid chain: Zinc import ATP-binding protein ZnuC (238 aa).

The region spanning 5-220 (ITLKNIHVSF…LEFISIFGLK (216 aa)) is the ABC transporter domain. Position 37–44 (37–44 (GPNGAGKS)) interacts with ATP.

The protein belongs to the ABC transporter superfamily. Zinc importer (TC 3.A.1.15.5) family. As to quaternary structure, the complex is composed of two ATP-binding proteins (ZnuC), two transmembrane proteins (ZnuB) and a solute-binding protein (ZnuA).

Its subcellular location is the cell inner membrane. The catalysed reaction is Zn(2+)(out) + ATP(in) + H2O(in) = Zn(2+)(in) + ADP(in) + phosphate(in) + H(+)(in). Part of the ABC transporter complex ZnuABC involved in zinc import. Responsible for energy coupling to the transport system. This is Zinc import ATP-binding protein ZnuC from Buchnera aphidicola subsp. Schizaphis graminum (strain Sg).